Consider the following 313-residue polypeptide: NADH-ubiquinone oxidoreductase chain 1 (313 aa).

Transmembrane regions (helical) follow at residues 6 to 26 (LLSG…FTLL), 71 to 91 (VFPF…LWIL), 105 to 125 (MLLF…AGWF), 149 to 169 (MSLI…SMIM), 173 to 193 (FFVW…VSCV), 220 to 242 (GVGF…VLVI), 255 to 275 (FGMG…WVRA), and 293 to 313 (YLPS…ILNG).

It belongs to the complex I subunit 1 family.

It localises to the mitochondrion inner membrane. The catalysed reaction is a ubiquinone + NADH + 5 H(+)(in) = a ubiquinol + NAD(+) + 4 H(+)(out). In terms of biological role, core subunit of the mitochondrial membrane respiratory chain NADH dehydrogenase (Complex I) that is believed to belong to the minimal assembly required for catalysis. Complex I functions in the transfer of electrons from NADH to the respiratory chain. The immediate electron acceptor for the enzyme is believed to be ubiquinone. In Heterololigo bleekeri (Spear squid), this protein is NADH-ubiquinone oxidoreductase chain 1 (ND1).